Here is a 214-residue protein sequence, read N- to C-terminus: Adenylate kinase (214 aa).

10 to 15 is an ATP binding site; the sequence is GAGKGT. Residues 30 to 59 form an NMP region; that stretch reads STGDMLRAAIKAGTELGKQAKAVIDAGQLV. Residues threonine 31, arginine 36, 57–59, 85–88, and glutamine 92 each bind AMP; these read QLV and GFPR. Residues 122-159 are LID; the sequence is GRRAHLPSGRTYHVVYNPPKVEGKDDVTGEDLVVRDDD. Residues arginine 123 and 132-133 each bind ATP; that span reads TY. 2 residues coordinate AMP: arginine 156 and arginine 167. Lysine 200 is a binding site for ATP.

Belongs to the adenylate kinase family. In terms of assembly, monomer.

It localises to the cytoplasm. The catalysed reaction is AMP + ATP = 2 ADP. It functions in the pathway purine metabolism; AMP biosynthesis via salvage pathway; AMP from ADP: step 1/1. In terms of biological role, catalyzes the reversible transfer of the terminal phosphate group between ATP and AMP. Plays an important role in cellular energy homeostasis and in adenine nucleotide metabolism. This Vibrio vulnificus (strain CMCP6) protein is Adenylate kinase.